Consider the following 492-residue polypeptide: Bifunctional purine biosynthesis protein PurH (492 aa).

In terms of domain architecture, MGS-like spans 1-144 (MKKAILSVSN…KNFKHVTTIV (144 aa)).

The protein belongs to the PurH family.

The enzyme catalyses (6R)-10-formyltetrahydrofolate + 5-amino-1-(5-phospho-beta-D-ribosyl)imidazole-4-carboxamide = 5-formamido-1-(5-phospho-D-ribosyl)imidazole-4-carboxamide + (6S)-5,6,7,8-tetrahydrofolate. It catalyses the reaction IMP + H2O = 5-formamido-1-(5-phospho-D-ribosyl)imidazole-4-carboxamide. Its pathway is purine metabolism; IMP biosynthesis via de novo pathway; 5-formamido-1-(5-phospho-D-ribosyl)imidazole-4-carboxamide from 5-amino-1-(5-phospho-D-ribosyl)imidazole-4-carboxamide (10-formyl THF route): step 1/1. It participates in purine metabolism; IMP biosynthesis via de novo pathway; IMP from 5-formamido-1-(5-phospho-D-ribosyl)imidazole-4-carboxamide: step 1/1. The protein is Bifunctional purine biosynthesis protein PurH of Staphylococcus epidermidis (strain ATCC 35984 / DSM 28319 / BCRC 17069 / CCUG 31568 / BM 3577 / RP62A).